A 476-amino-acid chain; its full sequence is Cyclase-associated protein 1 (476 aa).

Disordered regions lie at residues 224–262 (KPAS…KQGM) and 277–319 (GLRK…PPKM). Over residues 231-243 (KGPPGAPAPPPAP) the composition is skewed to pro residues. The segment covering 246 to 256 (SAESSKPSSSS) has biased composition (low complexity). Residues 280–293 (KVTDDMKTKNRADR) are compositionally biased toward basic and acidic residues. In terms of domain architecture, C-CAP/cofactor C-like spans 316 to 453 (PPKMELQMGR…PDGDWVEHAL (138 aa)).

The protein belongs to the CAP family. In terms of tissue distribution, expressed in roots, cotyledons, leaves, stems, flowers, pollen and shoots. Not detected in siliques.

Actin monomer binding protein that accelerates the exchange of ADP for ATP. Regulates the pool of unpolymerized ATP-actin. Key intermediate between actin-depolymerizing factor (ADF)-mediated disassembly and the profilin-based nucleation and elongation machinery. In Arabidopsis thaliana (Mouse-ear cress), this protein is Cyclase-associated protein 1 (CAP1).